We begin with the raw amino-acid sequence, 566 residues long: Phenylalanine--tRNA ligase beta subunit (566 aa).

One can recognise a B5 domain in the interval Y287–P362. 4 residues coordinate Mg(2+): D340, D346, E349, and D350.

It belongs to the phenylalanyl-tRNA synthetase beta subunit family. Type 2 subfamily. Tetramer of two alpha and two beta subunits. The cofactor is Mg(2+).

The protein localises to the cytoplasm. The enzyme catalyses tRNA(Phe) + L-phenylalanine + ATP = L-phenylalanyl-tRNA(Phe) + AMP + diphosphate + H(+). This is Phenylalanine--tRNA ligase beta subunit from Borreliella burgdorferi (strain ZS7) (Borrelia burgdorferi).